We begin with the raw amino-acid sequence, 322 residues long: Adenine deaminase (322 aa).

Residues H11, H13, and H189 each contribute to the Zn(2+) site. The active-site Proton donor is E192. Residue D270 coordinates Zn(2+). A substrate-binding site is contributed by D271.

This sequence belongs to the metallo-dependent hydrolases superfamily. Adenosine and AMP deaminases family. Adenine deaminase type 2 subfamily. It depends on Zn(2+) as a cofactor.

It catalyses the reaction adenine + H2O + H(+) = hypoxanthine + NH4(+). In terms of biological role, catalyzes the hydrolytic deamination of adenine to hypoxanthine. Plays an important role in the purine salvage pathway and in nitrogen catabolism. The polypeptide is Adenine deaminase (Rhizobium etli (strain ATCC 51251 / DSM 11541 / JCM 21823 / NBRC 15573 / CFN 42)).